The chain runs to 222 residues: CEACAM1-like protein UL7 (222 aa).

12 N-linked (GlcNAc...) asparagine; by host glycosylation sites follow: Asn50, Asn56, Asn60, Asn71, Asn105, Asn109, Asn125, Asn132, Asn147, Asn164, Asn168, and Asn189. The chain crosses the membrane as a helical span at residues 193-213 (LALVGVVVFLVLIVVCIMGWW).

It belongs to the RL11 family. Highly glycosylated.

The protein resides in the secreted. It localises to the host cell membrane. Its function is as follows. Plays a role in modulating the host immune response and affecting host cytokine production. Structurally and functionally homolog of host CEACAM1, induces endothelial cell angiogenesis. The polypeptide is CEACAM1-like protein UL7 (UL7) (Homo sapiens (Human)).